Here is a 327-residue protein sequence, read N- to C-terminus: Annexin A8-like protein 1 (327 aa).

Annexin repeat units follow at residues Phe21 to Tyr92, Pro93 to Gln164, Ala177 to Lys249, and Asn253 to Gly324. Met266, Gly268, Gly270, and Asp310 together coordinate Ca(2+).

The protein belongs to the annexin family.

This Homo sapiens (Human) protein is Annexin A8-like protein 1.